A 216-amino-acid polypeptide reads, in one-letter code: MFCFRKPSDSDIKQYINDRREEQFAYSNLYGTQDYATKEEYEMDPKYSNFDVDQVKIQLGTGVECFQKAVAALKQWKHFDLDWVDFYFKNTPIAVGETVGILSKQVGFWILSFARINYLYDGDQEDGSIKFGYSYGTLKDHVEKGEERFVIEWVRDPDGAPDKGAVYYEMLSFSEPSYWLSQLGYPVTRYFQNKFVVDSCNQMLKAVGSNQNVRHV.

It belongs to the UPF0548 family.

This Dictyostelium discoideum (Social amoeba) protein is UPF0548 protein.